We begin with the raw amino-acid sequence, 211 residues long: Protein-L-isoaspartate O-methyltransferase (211 aa).

Serine 60 is a catalytic residue.

It belongs to the methyltransferase superfamily. L-isoaspartyl/D-aspartyl protein methyltransferase family.

The protein localises to the cytoplasm. It carries out the reaction [protein]-L-isoaspartate + S-adenosyl-L-methionine = [protein]-L-isoaspartate alpha-methyl ester + S-adenosyl-L-homocysteine. Functionally, catalyzes the methyl esterification of L-isoaspartyl residues in peptides and proteins that result from spontaneous decomposition of normal L-aspartyl and L-asparaginyl residues. It plays a role in the repair and/or degradation of damaged proteins. The protein is Protein-L-isoaspartate O-methyltransferase of Pseudomonas aeruginosa (strain LESB58).